We begin with the raw amino-acid sequence, 126 residues long: Heavy metal-associated isoprenylated plant protein 14 (126 aa).

One can recognise an HMA domain in the interval A3 to D69. The residue at position 123 (C123) is a Cysteine methyl ester. Residue C123 is the site of S-farnesyl cysteine attachment. A propeptide spans V124–M126 (removed in mature form).

This sequence belongs to the HIPP family.

Probable heavy-metal-binding protein. In Arabidopsis thaliana (Mouse-ear cress), this protein is Heavy metal-associated isoprenylated plant protein 14.